A 197-amino-acid chain; its full sequence is Dephospho-CoA kinase (197 aa).

Positions Leu-4–Lys-197 constitute a DPCK domain. Ala-12–Thr-17 contacts ATP.

It belongs to the CoaE family.

It is found in the cytoplasm. The enzyme catalyses 3'-dephospho-CoA + ATP = ADP + CoA + H(+). It participates in cofactor biosynthesis; coenzyme A biosynthesis; CoA from (R)-pantothenate: step 5/5. Its function is as follows. Catalyzes the phosphorylation of the 3'-hydroxyl group of dephosphocoenzyme A to form coenzyme A. The protein is Dephospho-CoA kinase of Lactiplantibacillus plantarum (strain ATCC BAA-793 / NCIMB 8826 / WCFS1) (Lactobacillus plantarum).